A 267-amino-acid chain; its full sequence is Cytochrome b (267 aa).

Helical transmembrane passes span 33-53 (FGSLLGICLMIQILTGLFLAM), 77-98 (WLIRYLHANGASMFFICLFIHV), 113-133 (WNIGIILFLTTMATAFVGYVL), and 178-198 (FFAFHFILPFIITAFVLVHLL). Positions 83 and 97 each coordinate heme b. Residues H182 and H196 each contribute to the heme b site. H201 lines the a ubiquinone pocket. Residues 226-246 (IKDLLGVILLLMVLMILVLFF) traverse the membrane as a helical segment.

Belongs to the cytochrome b family. As to quaternary structure, the cytochrome bc1 complex contains 11 subunits: 3 respiratory subunits (MT-CYB, CYC1 and UQCRFS1), 2 core proteins (UQCRC1 and UQCRC2) and 6 low-molecular weight proteins (UQCRH/QCR6, UQCRB/QCR7, UQCRQ/QCR8, UQCR10/QCR9, UQCR11/QCR10 and a cleavage product of UQCRFS1). This cytochrome bc1 complex then forms a dimer. Requires heme b as cofactor.

Its subcellular location is the mitochondrion inner membrane. In terms of biological role, component of the ubiquinol-cytochrome c reductase complex (complex III or cytochrome b-c1 complex) that is part of the mitochondrial respiratory chain. The b-c1 complex mediates electron transfer from ubiquinol to cytochrome c. Contributes to the generation of a proton gradient across the mitochondrial membrane that is then used for ATP synthesis. This chain is Cytochrome b (MT-CYB), found in Abrothrix olivaceus (Olive grass mouse).